Reading from the N-terminus, the 215-residue chain is Adenylate kinase (215 aa).

10-15 (GAGKGT) provides a ligand contact to ATP. The interval 30-59 (STGDILRANVREGTELGLAAKAYMDKGELV) is NMP. AMP-binding positions include T31, R36, 57 to 59 (ELV), 85 to 88 (GYPR), and Q92. Residues 126-162 (GRLMCKCGASYHTIANPPKKDNICDICGGEVYQRDDD) form an LID region. Residue R127 participates in ATP binding. Residues C130 and C132 each coordinate Zn(2+). ATP is bound at residue 135–136 (SY). Positions 149 and 152 each coordinate Zn(2+). The AMP site is built by R159 and R170. K198 serves as a coordination point for ATP.

It belongs to the adenylate kinase family. Monomer.

It is found in the cytoplasm. It carries out the reaction AMP + ATP = 2 ADP. The protein operates within purine metabolism; AMP biosynthesis via salvage pathway; AMP from ADP: step 1/1. Catalyzes the reversible transfer of the terminal phosphate group between ATP and AMP. Plays an important role in cellular energy homeostasis and in adenine nucleotide metabolism. The chain is Adenylate kinase from Methanosarcina mazei (strain ATCC BAA-159 / DSM 3647 / Goe1 / Go1 / JCM 11833 / OCM 88) (Methanosarcina frisia).